The sequence spans 1185 residues: Syntaxin-binding protein 5-like (1185 aa).

Methionine 1 bears the N-acetylmethionine mark. Residues 15–44 form a disordered region; sequence ASSPGSGSSSGSNSGGAGSGSVHPGGTAGL. Positions 16-26 are enriched in low complexity; sequence SSPGSGSSSGS. WD repeat units follow at residues 73-106, 113-152, 157-193, 212-246, 252-284, 306-348, 356-390, 412-489, 517-628, and 642-704; these read TALA…CYCQ, VLQL…SLKF, ITYC…GYVI, HLSD…ELRV, IHSI…PSRP, PILK…KAIT, IVEF…VVDL, TCTA…YKLK, QMIY…DLVI, and TSLS…IADN. Position 567 is a phosphothreonine (threonine 567). The disordered stretch occupies residues 567–601; it reads TPEPETSPPFPDLSSQLPPSRSLSGSTNTVSSEGV. Serine 573, serine 588, and serine 592 each carry phosphoserine. Low complexity predominate over residues 578–592; sequence DLSSQLPPSRSLSGS. At threonine 595 the chain carries Phosphothreonine. Serine 598 carries the post-translational modification Phosphoserine. Residue arginine 708 is modified to Omega-N-methylarginine. Residues 747–768 show a composition bias toward polar residues; sequence TSDHVNGHCTSPTSQSCSSGKR. Positions 747-770 are disordered; the sequence is TSDHVNGHCTSPTSQSCSSGKRLS. Serine 762, serine 764, serine 765, serine 770, serine 771, serine 792, serine 799, serine 811, serine 819, serine 821, and serine 822 each carry phosphoserine. WD repeat units follow at residues 831–888, 897–968, 973–1017, and 1031–1054; these read ITAL…SGTF, TFSC…QTCL, ITET…LDVN, and CFTN…TYSQ. Threonine 1092 carries the post-translational modification Phosphothreonine. The v-SNARE coiled-coil homology domain maps to 1120-1180; that stretch reads SIEGMKGAAG…HELMLKYKDK (61 aa).

This sequence belongs to the WD repeat L(2)GL family. As to quaternary structure, interacts with STX1A and STX4. In terms of processing, phosphorylated, leading to STXBP5L increased turnover and subsequent de-repression of insulin secretion. Phosphorylated on serine residues in response to glucose or phorbol esters. Post-translationally, ubiquitinated by the E3 ligase SYVN1, leading to STXBP5L proteasomal degradation. Detected in hippocampus and cerebellum. Expressed in pancreatic beta-cells where it modulates insulin secretion.

The protein localises to the cytoplasm. The protein resides in the cell membrane. It localises to the membrane. Plays a role in vesicle trafficking and exocytosis inhibition. In pancreatic beta-cells, inhibits insulin secretion probably by interacting with and regulating STX1A and STX4, key t-SNARE proteins involved in the fusion of insulin granules to the plasma membrane. Also plays a role in neurotransmitter release by inhibiting basal acetylcholine release from axon terminals and by preventing synaptic fatigue upon repetitive stimulation. Promotes as well axonal outgrowth. This is Syntaxin-binding protein 5-like (Stxbp5l) from Mus musculus (Mouse).